The chain runs to 354 residues: (R,R)-butanediol dehydrogenase (354 aa).

An Enoyl reductase (ER) domain is found at 10–350 (GDIRIEDIPE…NNESAVKIIV (341 aa)). Residues Cys-37, His-71, and Glu-157 each contribute to the Zn(2+) site.

The protein belongs to the zinc-containing alcohol dehydrogenase family. It depends on Zn(2+) as a cofactor.

The catalysed reaction is (R,R)-butane-2,3-diol + NAD(+) = (R)-acetoin + NADH + H(+). The enzyme catalyses (S)-acetoin + NAD(+) = diacetyl + NADH + H(+). NAD-dependent butanediol dehydrogenase which catalyzes the oxidation of (R,R)-butane-2,3-diol to (3R)-acetoin and of meso-butane-2,3-diol to (3S)-acetoin. Preferentially oxidizes (R,R)-butane-2,3-diol, with a catalytic efficiency approximately fourfold higher than with meso-butane-2,3-diol. Shows a very low activity with (S,S)-butane-2,3-diol. Can also catalyze the reduction of (3R/3S)-acetoin and diacetyl in the presence of NADH. The polypeptide is (R,R)-butanediol dehydrogenase (Neisseria gonorrhoeae (strain ATCC 700825 / FA 1090)).